The chain runs to 397 residues: MQKQNIVILGSTGSIGKSTLSVIENNPQKYHAFALVGGKNVETMFEQCIKFRPHFAALDDVNAAKILREKLIAHHIPTEVLAGQRAICELAAHPDADQIMASIVGAAGLLPTLSAVKAGKRVLLANKESLVTCGQLFIDAVKNYGAKLLPVDSEHNAIFQSLPPEAQEKIGFCPLSELGVSKIILTGSGGPFRYTPLEQFASITPEQAVAHPNWSMGKKISVDSATMMNKGLEYIEARWLFNASAEEMEVIIHPQSIIHSMVRYVDGSVIAQMGNPDMRTPIAETMAYPHRTFAGVEPLDFFKIKELTFIEPDFNRYPNLKLAIDAFAAGQYATTAMNAANEIAVQAFLDRQISFMDIAKINLKTIEKISPYTIQNIDDVLEIDAQAREIAKTLIRE.

8 residues coordinate NADPH: T12, G13, S14, I15, G38, K39, N40, and N126. K127 lines the 1-deoxy-D-xylulose 5-phosphate pocket. Residue E128 coordinates NADPH. A Mn(2+)-binding site is contributed by D152. 1-deoxy-D-xylulose 5-phosphate-binding residues include S153, E154, S188, and H211. E154 contributes to the Mn(2+) binding site. G217 is a binding site for NADPH. The 1-deoxy-D-xylulose 5-phosphate site is built by S224, N229, K230, and E233. E233 lines the Mn(2+) pocket.

This sequence belongs to the DXR family. The cofactor is Mg(2+). Mn(2+) is required as a cofactor.

The catalysed reaction is 2-C-methyl-D-erythritol 4-phosphate + NADP(+) = 1-deoxy-D-xylulose 5-phosphate + NADPH + H(+). It participates in isoprenoid biosynthesis; isopentenyl diphosphate biosynthesis via DXP pathway; isopentenyl diphosphate from 1-deoxy-D-xylulose 5-phosphate: step 1/6. In terms of biological role, catalyzes the NADPH-dependent rearrangement and reduction of 1-deoxy-D-xylulose-5-phosphate (DXP) to 2-C-methyl-D-erythritol 4-phosphate (MEP). This chain is 1-deoxy-D-xylulose 5-phosphate reductoisomerase, found in Haemophilus influenzae (strain PittGG).